A 156-amino-acid polypeptide reads, in one-letter code: Arginine repressor (156 aa).

This sequence belongs to the ArgR family.

It localises to the cytoplasm. The protein operates within amino-acid biosynthesis; L-arginine biosynthesis [regulation]. In terms of biological role, regulates arginine biosynthesis genes. The sequence is that of Arginine repressor from Shewanella loihica (strain ATCC BAA-1088 / PV-4).